Reading from the N-terminus, the 278-residue chain is Cyclin-C (278 aa).

The 99-residue stretch at asparagine 41–glutamate 139 folds into the Cyclin N-terminal domain. The tract at residues threonine 247 to serine 278 is disordered. A compositionally biased stretch (polar residues) spans proline 267 to serine 278. The residue at position 270 (serine 270) is a Phosphoserine.

It belongs to the cyclin family. Cyclin C subfamily. As to quaternary structure, component of the Mediator complex, which is composed of MED1, MED4, MED6, MED7, MED8, MED9, MED10, MED11, MED12, MED13, MED13L, MED14, MED15, MED16, MED17, MED18, MED19, MED20, MED21, MED22, MED23, MED24, MED25, MED26, MED27, MED29, MED30, MED31, CCNC, CDK8 and CDC2L6/CDK11. The MED12, MED13, CCNC and CDK8 subunits form a distinct module termed the CDK8 module. Mediator containing the CDK8 module is less active than Mediator lacking this module in supporting transcriptional activation. Individual preparations of the Mediator complex lacking one or more distinct subunits have been variously termed ARC, CRSP, DRIP, PC2, SMCC and TRAP. The cylin/CDK pair formed by CCNC/CDK8 also associates with the large subunit of RNA polymerase II.

It localises to the nucleus. Functionally, component of the Mediator complex, a coactivator involved in regulated gene transcription of nearly all RNA polymerase II-dependent genes. Mediator functions as a bridge to convey information from gene-specific regulatory proteins to the basal RNA polymerase II transcription machinery. Mediator is recruited to promoters by direct interactions with regulatory proteins and serves as a scaffold for the assembly of a functional preinitiation complex with RNA polymerase II and the general transcription factors. Binds to and activates cyclin-dependent kinase CDK8 that phosphorylates the CTD (C-terminal domain) of the large subunit of RNA polymerase II (RNAp II), which may inhibit the formation of a transcription initiation complex. This Rattus norvegicus (Rat) protein is Cyclin-C (Ccnc).